We begin with the raw amino-acid sequence, 298 residues long: Protease HtpX (298 aa).

Transmembrane regions (helical) follow at residues 4–24 (IGLFLLTNIAVLAVAMITMNL) and 38–58 (LGNLFAFAAIIGFAGSFVSLA). His145 provides a ligand contact to Zn(2+). Glu146 is a catalytic residue. His149 lines the Zn(2+) pocket. Helical transmembrane passes span 160–180 (LLQGVVNTFVIFFAKIVAYVV) and 194–214 (ITFIVVDIVAQILFGILASMI). Glu223 contacts Zn(2+).

The protein belongs to the peptidase M48B family. Zn(2+) is required as a cofactor.

It localises to the cell inner membrane. The chain is Protease HtpX from Hydrogenovibrio crunogenus (strain DSM 25203 / XCL-2) (Thiomicrospira crunogena).